Here is a 912-residue protein sequence, read N- to C-terminus: Nitrate reductase [NADH] (912 aa).

The segment at 1–99 (SVEPRQPFGR…PRDEGTADAW (99 aa)) is disordered. The segment covering 13 to 23 (APATAPTARAP) has biased composition (low complexity). The span at 54 to 68 (AEEDEEDDDEDDEGH) shows a compositional bias: acidic residues. Basic and acidic residues predominate over residues 85-94 (PSTRDPRDEG). Cys-186 contributes to the Mo-molybdopterin binding site. The Cytochrome b5 heme-binding domain occupies 535–610 (DKQFTMSEVR…LDTYRIGELI (76 aa)). The heme site is built by His-570 and His-593. Residues 651 to 764 (REKVPCRLVD…KGPLGHVEYT (114 aa)) enclose the FAD-binding FR-type domain. Residues 703 to 706 (RAYT), 720 to 724 (LVKVY), Phe-725, Phe-732, 737 to 739 (LMT), Ser-788, and Thr-791 each bind FAD.

The protein belongs to the nitrate reductase family. As to quaternary structure, homodimer. FAD is required as a cofactor. Heme serves as cofactor. It depends on Mo-molybdopterin as a cofactor.

The enzyme catalyses nitrite + NAD(+) + H2O = nitrate + NADH + H(+). Its function is as follows. Nitrate reductase is a key enzyme involved in the first step of nitrate assimilation in plants, fungi and bacteria. This chain is Nitrate reductase [NADH], found in Hordeum vulgare (Barley).